Here is a 188-residue protein sequence, read N- to C-terminus: Peptidyl-tRNA hydrolase (188 aa).

Tyr-14 serves as a coordination point for tRNA. The active-site Proton acceptor is the His-19. Positions 64, 66, and 112 each coordinate tRNA.

The protein belongs to the PTH family. In terms of assembly, monomer.

The protein resides in the cytoplasm. The enzyme catalyses an N-acyl-L-alpha-aminoacyl-tRNA + H2O = an N-acyl-L-amino acid + a tRNA + H(+). Its function is as follows. Hydrolyzes ribosome-free peptidyl-tRNAs (with 1 or more amino acids incorporated), which drop off the ribosome during protein synthesis, or as a result of ribosome stalling. In terms of biological role, catalyzes the release of premature peptidyl moieties from peptidyl-tRNA molecules trapped in stalled 50S ribosomal subunits, and thus maintains levels of free tRNAs and 50S ribosomes. The protein is Peptidyl-tRNA hydrolase of Clostridium tetani (strain Massachusetts / E88).